A 208-amino-acid polypeptide reads, in one-letter code: Large ribosomal subunit protein uL4 (208 aa).

Residues 49-78 (KAKGISDISGTTAKPYRQKHTGRARQGSLR) form a disordered region.

Belongs to the universal ribosomal protein uL4 family. As to quaternary structure, part of the 50S ribosomal subunit.

Its function is as follows. One of the primary rRNA binding proteins, this protein initially binds near the 5'-end of the 23S rRNA. It is important during the early stages of 50S assembly. It makes multiple contacts with different domains of the 23S rRNA in the assembled 50S subunit and ribosome. Forms part of the polypeptide exit tunnel. The polypeptide is Large ribosomal subunit protein uL4 (Anaplasma phagocytophilum (strain HZ)).